Here is a 369-residue protein sequence, read N- to C-terminus: MIFLIGNSTSNYTVCFPIFILEDTRALKFPYSMLQALEFVLTFVSFYYVIKCCYVAIHIKSFHRNLTVLLIILMIQWFEGLLSNILIKPYETGFWPLGEHNTQLKQWWTKDYSKMIQVPNLSTFPNFFLGGFLKWHYILSMITTLLVMSIERSFACYFLTDYEKKSRNGLFFMLVVGQTSTNLVMGYLFFFNAAHFAVGFSIILSTNIIAMGIFTYVKHVNRQVNRAIEDFSNPSLYCLPARFQVRENVRCFQMITKVIHAGLFLILTACFVNLFMYLELTPGLDPLLNLIFESAINLNPVVIVPTLLGSVNAWRNFTFSSGVCLGFKAQVRLKIIKVSSVSIGNDGAKSDRTRKETDAYFDQLNSAWI.

The next 8 membrane-spanning stretches (helical) occupy residues 1-21 (MIFLIGNSTSNYTVCFPIFIL), 39-59 (FVLTFVSFYYVIKCCYVAIHI), 67-87 (TVLLIILMIQWFEGLLSNILI), 127-147 (FFLGGFLKWHYILSMITTLLV), 169-191 (GLFFMLVVGQTSTNLVMGYLFFF), 195-217 (HFAVGFSIILSTNIIAMGIFTYV), 258-278 (VIHAGLFLILTACFVNLFMYL), and 291-311 (IFESAINLNPVVIVPTLLGSV).

Belongs to the nematode receptor-like protein sre family.

Its subcellular location is the membrane. This chain is Serpentine receptor class epsilon-45 (sre-45), found in Caenorhabditis elegans.